Here is a 173-residue protein sequence, read N- to C-terminus: ATP synthase subunit b (173 aa).

The chain crosses the membrane as a helical span at residues 15–35; it reads GVEWGTVIVQVLTFIVLLALL.

This sequence belongs to the ATPase B chain family. In terms of assembly, F-type ATPases have 2 components, F(1) - the catalytic core - and F(0) - the membrane proton channel. F(1) has five subunits: alpha(3), beta(3), gamma(1), delta(1), epsilon(1). F(0) has three main subunits: a(1), b(2) and c(10-14). The alpha and beta chains form an alternating ring which encloses part of the gamma chain. F(1) is attached to F(0) by a central stalk formed by the gamma and epsilon chains, while a peripheral stalk is formed by the delta and b chains.

It is found in the cell membrane. In terms of biological role, f(1)F(0) ATP synthase produces ATP from ADP in the presence of a proton or sodium gradient. F-type ATPases consist of two structural domains, F(1) containing the extramembraneous catalytic core and F(0) containing the membrane proton channel, linked together by a central stalk and a peripheral stalk. During catalysis, ATP synthesis in the catalytic domain of F(1) is coupled via a rotary mechanism of the central stalk subunits to proton translocation. Component of the F(0) channel, it forms part of the peripheral stalk, linking F(1) to F(0). The sequence is that of ATP synthase subunit b from Staphylococcus aureus (strain MSSA476).